The sequence spans 205 residues: Probable thymidylate kinase (205 aa).

9–16 provides a ligand contact to ATP; it reads GIDGVGKS.

The protein belongs to the thymidylate kinase family.

It catalyses the reaction dTMP + ATP = dTDP + ADP. This chain is Probable thymidylate kinase, found in Caldivirga maquilingensis (strain ATCC 700844 / DSM 13496 / JCM 10307 / IC-167).